The primary structure comprises 977 residues: Macrophage colony-stimulating factor 1 receptor (977 aa).

The first 18 residues, Met-1–Gly-18, serve as a signal peptide directing secretion. At Trp-19–Ser-519 the chain is on the extracellular side. 5 consecutive Ig-like C2-type domains span residues Pro-22–Phe-109, Pro-120–Ser-198, Pro-213–Leu-305, Pro-316–Thr-407, and Phe-408–Ser-513. A disulfide bond links Cys-48 and Cys-92. Residues Asn-98, Asn-101, Asn-154, Asn-163, Asn-244, Asn-286, Asn-298, Asn-361, Asn-424, and Asn-455 are each glycosylated (N-linked (GlcNAc...) asparagine). Disulfide bonds link Cys-138–Cys-187 and Cys-234–Cys-289. Cys-430 and Cys-495 form a disulfide bridge. A helical transmembrane segment spans residues Ala-520–Tyr-540. Over Lys-541 to Cys-977 the chain is Cytoplasmic. Positions Gln-544–Lys-576 are regulatory juxtamembrane domain. Tyr-563 carries the phosphotyrosine; by autocatalysis modification. The Protein kinase domain maps to Leu-584–Leu-917. Residues Leu-590 to Val-598 and Lys-618 each bind ATP. Tyr-701 and Tyr-725 each carry phosphotyrosine; by autocatalysis. Asp-781 acts as the Proton acceptor in catalysis. The interval Asp-799–Pro-821 is activation loop. A phosphotyrosine; by autocatalysis mark is found at Tyr-812 and Tyr-929. Residues Glu-919 to Cys-977 are disordered. Positions Glu-953–Gln-966 are enriched in acidic residues. Tyr-974 bears the Phosphotyrosine; by autocatalysis mark.

This sequence belongs to the protein kinase superfamily. Tyr protein kinase family. CSF-1/PDGF receptor subfamily. Monomer. Homodimer. Interacts with CSF1. Autophosphorylated in response to CSF1 binding. autophosphorylation, leading to its degradation. In terms of processing, ubiquitinated. Becomes rapidly polyubiquitinated after autophosphorylation, leading to its degradation.

The protein resides in the cell membrane. The catalysed reaction is L-tyrosyl-[protein] + ATP = O-phospho-L-tyrosyl-[protein] + ADP + H(+). With respect to regulation, present in an inactive conformation in the absence of bound ligand. CSF1 binding leads to dimerization and activation by autophosphorylation on tyrosine residues. In terms of biological role, tyrosine-protein kinase that acts as a cell-surface receptor for CSF1 and plays an essential role in the regulation of survival, proliferation and differentiation of hematopoietic precursor cells, especially mononuclear phagocytes, such as macrophages and monocytes. Plays an important role in innate immunity and in inflammatory processes. Plays an important role in the regulation of osteoclast proliferation and differentiation, the regulation of bone resorption, and is required for normal bone development. Promotes reorganization of the actin cytoskeleton, regulates formation of membrane ruffles, cell adhesion and cell migration. Activates several signaling pathways in response to ligand binding. In Danio rerio (Zebrafish), this protein is Macrophage colony-stimulating factor 1 receptor (csf1r).